The chain runs to 81 residues: Gamma-conotoxin-like TeA53 (81 aa).

The first 19 residues, 1–19, serve as a signal peptide directing secretion; it reads MQKLTILLLVAAVLMSTQA. The propeptide occupies 20–42; sequence LNQEQHQRAKINLLSKRKPPAER. Cystine bridges form between C49-C63, C56-C67, and C62-C72.

Belongs to the conotoxin O2 superfamily. As to expression, expressed by the venom duct.

Its subcellular location is the secreted. Its function is as follows. Gamma-conotoxins may act on voltage-gated non-specific cation pacemaker channels (HCN). In Conus textile (Cloth-of-gold cone), this protein is Gamma-conotoxin-like TeA53.